Consider the following 721-residue polypeptide: Polyribonucleotide nucleotidyltransferase (721 aa).

2 residues coordinate Mg(2+): D495 and D501. One can recognise a KH domain in the interval 562 to 621; it reads PRLLSFRIDPELIGTVIGPGGRTIKGITERTNTKIDIEDGGIVTIASHDGAAAEEAQKII. The S1 motif domain maps to 631–699; that stretch reads GEIFPGVVTR…SRGRINLTLR (69 aa).

The protein belongs to the polyribonucleotide nucleotidyltransferase family. Mg(2+) is required as a cofactor.

Its subcellular location is the cytoplasm. The catalysed reaction is RNA(n+1) + phosphate = RNA(n) + a ribonucleoside 5'-diphosphate. Its function is as follows. Involved in mRNA degradation. Catalyzes the phosphorolysis of single-stranded polyribonucleotides processively in the 3'- to 5'-direction. This Prochlorococcus marinus subsp. pastoris (strain CCMP1986 / NIES-2087 / MED4) protein is Polyribonucleotide nucleotidyltransferase.